The primary structure comprises 149 residues: Large ribosomal subunit protein bL9 (149 aa).

It belongs to the bacterial ribosomal protein bL9 family.

Binds to the 23S rRNA. The polypeptide is Large ribosomal subunit protein bL9 (Tolumonas auensis (strain DSM 9187 / NBRC 110442 / TA 4)).